We begin with the raw amino-acid sequence, 343 residues long: GTPase Obg (343 aa).

Positions 1-159 constitute an Obg domain; it reads MKYIDEVKIQ…FELKLELRVL (159 aa). Residues 160-334 form the OBG-type G domain; that stretch reads ADVGLLGLPN…LTYAIMGYLE (175 aa). GTP is bound by residues 166 to 173, 191 to 195, 213 to 216, 284 to 287, and 315 to 317; these read GLPNAGKS, FTTLY, DIPG, NKVD, and SAL. Residues Ser-173 and Thr-193 each contribute to the Mg(2+) site.

The protein belongs to the TRAFAC class OBG-HflX-like GTPase superfamily. OBG GTPase family. Monomer. Mg(2+) serves as cofactor.

It localises to the cytoplasm. Its function is as follows. An essential GTPase which binds GTP, GDP and possibly (p)ppGpp with moderate affinity, with high nucleotide exchange rates and a fairly low GTP hydrolysis rate. Plays a role in control of the cell cycle, stress response, ribosome biogenesis and in those bacteria that undergo differentiation, in morphogenesis control. In Nitrosomonas eutropha (strain DSM 101675 / C91 / Nm57), this protein is GTPase Obg.